A 354-amino-acid polypeptide reads, in one-letter code: Ion-translocating oxidoreductase complex subunit D (354 aa).

4 consecutive transmembrane segments (helical) span residues 19 to 39, 40 to 60, 77 to 99, and 119 to 139; these read IMLL…YYFG, FGVL…EFLV, AAVT…LSFF, and IFNP…ILMT. T187 is subject to FMN phosphoryl threonine. 5 helical membrane passes run 221–241, 245–265, 268–288, 295–315, and 319–339; these read WISI…FNVI, IPVS…YFFK, MYYP…FFIA, SITK…IWLI, and GNYP…VPLI.

It belongs to the NqrB/RnfD family. As to quaternary structure, the complex is composed of six subunits: RnfA, RnfB, RnfC, RnfD, RnfE and RnfG. The cofactor is FMN.

It localises to the cell inner membrane. Functionally, part of a membrane-bound complex that couples electron transfer with translocation of ions across the membrane. This Buchnera aphidicola subsp. Baizongia pistaciae (strain Bp) protein is Ion-translocating oxidoreductase complex subunit D.